The chain runs to 460 residues: MDILFRIRGGLDLAFQLATTDEASAKSVLKYVFSDLANKLSSDVLVLRICNSSVYVWPNNGINTVPELTDDSACKEIKRFVHFDQDDETRRKLGKKKDKKLQDMVINIDLMLEMTSSSDALAPVIERENKEHHYINMTLPVDVVVSVSPDETWGKVQNLLVKAIHKQLTDMERCIMKYMKGTSIVVPEQFHFMLPGKNHLVTISYPTGISDDQLESYRKELHGLFNLPCDRPYFKRANAYHFPDEPYKDGYLKNPHLHLNSPGPESGVVYLVHGTYSYHHYMQDRTDDSGWGCAYRSLQTICSWFKQQGYVDAPIPTHKEIQQALVDAGDKPAAFVGSRQWIGSVEVQLVLNQLFGITSKILFVSQGSELALQGRELANHFKTEGTPVMIGGGVLAHTILGVAWNEMTGQIKYLILDPHYTGGEDLHVILDKGWCAWKGPDFWSKDAYYNLCLPQRPKTI.

Active-site residues include Cys293, Asp417, and His419.

This sequence belongs to the peptidase C78 family.

The protein resides in the endoplasmic reticulum. Its subcellular location is the cytoplasm. The protein localises to the nucleus. Its function is as follows. Thiol-dependent isopeptidase that specifically cleaves UFM1, a ubiquitin-like modifier protein, from conjugated proteins. While it is also able to mediate the processing of UFM1 precursors, a prerequisite for conjugation reactions, UFSP2 mainly acts as a protein deUFMylase that mediates deconjugation of UFM1 from target proteins. This Gallus gallus (Chicken) protein is Ufm1-specific protease 2.